We begin with the raw amino-acid sequence, 556 residues long: Arginine--tRNA ligase (556 aa).

Residues 133–143 (ANPTGPIHIGH) carry the 'HIGH' region motif.

The protein belongs to the class-I aminoacyl-tRNA synthetase family. Monomer.

It localises to the cytoplasm. The enzyme catalyses tRNA(Arg) + L-arginine + ATP = L-arginyl-tRNA(Arg) + AMP + diphosphate. This is Arginine--tRNA ligase from Dehalococcoides mccartyi (strain CBDB1).